A 295-amino-acid chain; its full sequence is Nucleotide-binding protein BH3569 (295 aa).

14–21 (GMSGAGKT) contributes to the ATP binding site. 65–68 (DLRG) contacts GTP.

This sequence belongs to the RapZ-like family.

In terms of biological role, displays ATPase and GTPase activities. This is Nucleotide-binding protein BH3569 from Halalkalibacterium halodurans (strain ATCC BAA-125 / DSM 18197 / FERM 7344 / JCM 9153 / C-125) (Bacillus halodurans).